The following is a 305-amino-acid chain: Acyl transferase (305 aa).

Active-site charge relay system residues include serine 114, aspartate 211, and histidine 241.

Belongs to the LuxD family.

It participates in lipid metabolism; fatty acid reduction for biolumincescence. In terms of biological role, acyl transferase is part of the fatty acid reductase system required for aldehyde biosynthesis; it produces fatty acids for the luminescent reaction. This Vibrio campbellii (strain ATCC BAA-1116) protein is Acyl transferase.